Reading from the N-terminus, the 165-residue chain is Small ribosomal subunit protein uS5 (165 aa).

The S5 DRBM domain occupies 10–73 (LKEKVVFINR…EDAKKNLVEV (64 aa)).

It belongs to the universal ribosomal protein uS5 family. As to quaternary structure, part of the 30S ribosomal subunit. Contacts proteins S4 and S8.

Functionally, with S4 and S12 plays an important role in translational accuracy. Located at the back of the 30S subunit body where it stabilizes the conformation of the head with respect to the body. The polypeptide is Small ribosomal subunit protein uS5 (Clostridium acetobutylicum (strain ATCC 824 / DSM 792 / JCM 1419 / IAM 19013 / LMG 5710 / NBRC 13948 / NRRL B-527 / VKM B-1787 / 2291 / W)).